The sequence spans 90 residues: Small ribosomal subunit protein bS18 (90 aa).

Positions 1 to 14 (MARDNGNKDRDGKR) are enriched in basic and acidic residues. The segment at 1 to 23 (MARDNGNKDRDGKRPNGGRNRKM) is disordered.

The protein belongs to the bacterial ribosomal protein bS18 family. In terms of assembly, part of the 30S ribosomal subunit. Forms a tight heterodimer with protein bS6.

Its function is as follows. Binds as a heterodimer with protein bS6 to the central domain of the 16S rRNA, where it helps stabilize the platform of the 30S subunit. The chain is Small ribosomal subunit protein bS18 from Clostridium acetobutylicum (strain ATCC 824 / DSM 792 / JCM 1419 / IAM 19013 / LMG 5710 / NBRC 13948 / NRRL B-527 / VKM B-1787 / 2291 / W).